Consider the following 286-residue polypeptide: MQMTAEEKQTSAKIPAERSTCDIYIPPERKAIAGGGKPHVVARDFSIYYGEFEAVKKVNAEILSKYVTAIIGPSGCGKSTFLRAINRMNDLIPNCHTTGALMFDGEDIYGKFTDEVLLRKKIGMVFQKPNPFPKSIFDNIAYGPKLHGIKDKKKLSEIVEKSLRKAALWDEVSDRLDKNALGLSGGQQQRLCVARALAVEPEILLLDEPTSALDPKATAKIEDLIQELRGSYTIMIVTHNMQQASRVSDYTMFFYEGVLVEHAPTTQLFTRPKDSMTEDYITGRFS.

The ABC transporter domain occupies 40-281 (VVARDFSIYY…PKDSMTEDYI (242 aa)). 72 to 79 (GPSGCGKS) contributes to the ATP binding site.

This sequence belongs to the ABC transporter superfamily. Phosphate importer (TC 3.A.1.7) family. In terms of assembly, the complex is composed of two ATP-binding proteins (PstB), two transmembrane proteins (PstC and PstA) and a solute-binding protein (PstS).

It localises to the cell inner membrane. It carries out the reaction phosphate(out) + ATP + H2O = ADP + 2 phosphate(in) + H(+). Its function is as follows. Part of the ABC transporter complex PstSACB involved in phosphate import. Responsible for energy coupling to the transport system. The polypeptide is Phosphate import ATP-binding protein PstB (Chlorobaculum tepidum (strain ATCC 49652 / DSM 12025 / NBRC 103806 / TLS) (Chlorobium tepidum)).